The chain runs to 101 residues: Small ribosomal subunit protein uS14 (101 aa).

Positions 1–20 (MAKISAVERNKKRERLTKRD) are disordered.

This sequence belongs to the universal ribosomal protein uS14 family. In terms of assembly, part of the 30S ribosomal subunit. Contacts proteins S3 and S10.

Binds 16S rRNA, required for the assembly of 30S particles and may also be responsible for determining the conformation of the 16S rRNA at the A site. The sequence is that of Small ribosomal subunit protein uS14 from Rhodospirillum rubrum (strain ATCC 11170 / ATH 1.1.1 / DSM 467 / LMG 4362 / NCIMB 8255 / S1).